Here is an 83-residue protein sequence, read N- to C-terminus: Small ribosomal subunit protein uS17 (83 aa).

This sequence belongs to the universal ribosomal protein uS17 family. Part of the 30S ribosomal subunit.

In terms of biological role, one of the primary rRNA binding proteins, it binds specifically to the 5'-end of 16S ribosomal RNA. The protein is Small ribosomal subunit protein uS17 of Ehrlichia canis (strain Jake).